An 803-amino-acid chain; its full sequence is Dynein axonemal intermediate chain 4 (803 aa).

The span at 1 to 33 (MPSSPTSTRKQTNFTASVSAQSRKSISFGNPKS) shows a compositional bias: polar residues. Disordered stretches follow at residues 1–41 (MPSS…GYAG), 88–109 (LYHP…SQEG), and 143–163 (STVS…LEDP). Low complexity predominate over residues 143 to 155 (STVSKSSISTTES). WD repeat units follow at residues 492–532 (QSPY…NTPV), 541–589 (KHLG…DCHD), 616–656 (SRQA…QYLE), 660–700 (GHKG…PFFT), 703–742 (PTTY…LDPL), and 748–787 (NPGI…TPTE).

As to quaternary structure, part of the multisubunit axonemal dynein complex formed at least of two heavy chains and a number of intermediate and light chains. Associated with axonemal dynein subunits such as, DNAH2, DNAI3, and DYNLT1. Interacts with DYNLT1.

The protein resides in the cytoplasm. The protein localises to the cytoskeleton. Its subcellular location is the flagellum axoneme. It is found in the cilium axoneme. It localises to the dynein axonemal particle. In terms of biological role, plays a critical role in the assembly of axonemal dynein complex, thereby playing a role in ciliary motility. In Rattus norvegicus (Rat), this protein is Dynein axonemal intermediate chain 4.